Here is a 340-residue protein sequence, read N- to C-terminus: UDP-glucose 4-epimerase (340 aa).

Residues 16-17 (YI), 37-42 (IDNNKN), 60-61 (DL), 82-86 (FAAKT), Ser127, Tyr154, Lys158, and Phe182 contribute to the NAD(+) site. Substrate contacts are provided by Ser127 and Tyr154. Tyr154 serves as the catalytic Proton acceptor. Substrate-binding positions include Asn183, 199 to 200 (TL), 216 to 218 (FLY), Arg231, and 295 to 298 (RSWD).

The protein belongs to the NAD(P)-dependent epimerase/dehydratase family. As to quaternary structure, homodimer. It depends on NAD(+) as a cofactor.

It catalyses the reaction UDP-alpha-D-glucose = UDP-alpha-D-galactose. It participates in carbohydrate metabolism; galactose metabolism. Functionally, involved in the metabolism of galactose. Catalyzes the conversion of UDP-galactose (UDP-Gal) to UDP-glucose (UDP-Glc) through a mechanism involving the transient reduction of NAD. The chain is UDP-glucose 4-epimerase (galE) from Mycoplasma genitalium (strain ATCC 33530 / DSM 19775 / NCTC 10195 / G37) (Mycoplasmoides genitalium).